Reading from the N-terminus, the 688-residue chain is Glycine--tRNA ligase beta subunit (688 aa).

This sequence belongs to the class-II aminoacyl-tRNA synthetase family. As to quaternary structure, tetramer of two alpha and two beta subunits.

Its subcellular location is the cytoplasm. It catalyses the reaction tRNA(Gly) + glycine + ATP = glycyl-tRNA(Gly) + AMP + diphosphate. This chain is Glycine--tRNA ligase beta subunit, found in Aliivibrio salmonicida (strain LFI1238) (Vibrio salmonicida (strain LFI1238)).